The following is a 246-amino-acid chain: MSVISMKQLLEAGVHFGHQTRRWNPKMAEYIYTERNGIYIIDLQKSVGKVDEAYYAIKDVVANGGKVLFVGTKKQAQDSVKSEAERCGMYYVNERWLGGMLTNFKTIQSRIKRLKEIETMANDGTFEVLPKKEVIELKKEWEKLEKNLGGIKDMKEVPEAIFVVDPKKERICIQEAHNLGVKLIGIADTNCDPEELDHVIPGNDDAIRAVKLIVAKMADAVIEANQGVQLTDSTDVAEEATETVEA.

The protein belongs to the universal ribosomal protein uS2 family.

This chain is Small ribosomal subunit protein uS2, found in Lachnoclostridium phytofermentans (strain ATCC 700394 / DSM 18823 / ISDg) (Clostridium phytofermentans).